Here is a 225-residue protein sequence, read N- to C-terminus: Octanoyltransferase (225 aa).

Residues 29–210 (PDTDDEIWVV…RLIAHLDGAT (182 aa)) form the BPL/LPL catalytic domain. Residues 69–76 (RGGQITYH), 141–143 (ALG), and 154–156 (GLS) each bind substrate. The active-site Acyl-thioester intermediate is the Cys172.

It belongs to the LipB family.

The protein resides in the cytoplasm. It carries out the reaction octanoyl-[ACP] + L-lysyl-[protein] = N(6)-octanoyl-L-lysyl-[protein] + holo-[ACP] + H(+). Its pathway is protein modification; protein lipoylation via endogenous pathway; protein N(6)-(lipoyl)lysine from octanoyl-[acyl-carrier-protein]: step 1/2. In terms of biological role, catalyzes the transfer of endogenously produced octanoic acid from octanoyl-acyl-carrier-protein onto the lipoyl domains of lipoate-dependent enzymes. Lipoyl-ACP can also act as a substrate although octanoyl-ACP is likely to be the physiological substrate. The chain is Octanoyltransferase from Burkholderia pseudomallei (strain K96243).